The chain runs to 193 residues: Thymidine kinase (193 aa).

Residues 15–22 and 87–90 contribute to the ATP site; these read GCMYSGKT and DELH. Catalysis depends on glutamate 88, which acts as the Proton acceptor. Residues cysteine 147, cysteine 150, cysteine 185, and cysteine 188 each coordinate Zn(2+).

The protein belongs to the thymidine kinase family. Homotetramer.

It is found in the cytoplasm. The catalysed reaction is thymidine + ATP = dTMP + ADP + H(+). The polypeptide is Thymidine kinase (Chloroflexus aurantiacus (strain ATCC 29366 / DSM 635 / J-10-fl)).